A 64-amino-acid chain; its full sequence is MASKKGVRLIITLECTECRTNTNKRSPGVNRYTTSKNRRNTTGRIELKKFCPHCNTHTVHKEIK.

The protein belongs to the bacterial ribosomal protein bL33 family.

In Crocosphaera subtropica (strain ATCC 51142 / BH68) (Cyanothece sp. (strain ATCC 51142)), this protein is Large ribosomal subunit protein bL33.